A 91-amino-acid chain; its full sequence is MKKLFAALALAAVVAPVWAATQTVTLSVPGMTCSTCPITVKKAISKVEGVSKIDVTFETREAVVTFDDAKTSVQKLTKATGDAGYPSSVKQ.

Residues 1 to 19 (MKKLFAALALAAVVAPVWA) form the signal peptide. Residues 22-88 (QTVTLSVPGM…ATGDAGYPSS (67 aa)) form the HMA domain. Hg(2+) contacts are provided by cysteine 33 and cysteine 36.

The protein belongs to the MerP family. Monomer.

Its subcellular location is the periplasm. Its function is as follows. Involved in mercury resistance. Acts as a mercury scavenger that specifically binds to a mercuric ion in the periplasm and probably passes it to the cytoplasmic mercuric reductase MerA via the mercuric transport protein MerT. The protein is Mercuric transport protein periplasmic component (merP) of Alcaligenes sp.